A 906-amino-acid chain; its full sequence is Ribonucleoside-diphosphate reductase large subunit-like protein (906 aa).

Disordered stretches follow at residues 1 to 70 and 89 to 129; these read MNPA…AGNT and VSWR…LSTF. Positions 98 to 109 are enriched in polar residues; the sequence is PDGTPSVLSLTR.

Belongs to the ribonucleoside diphosphate reductase large chain family.

The protein resides in the virion. The protein localises to the host cytoplasm. Does not possess a ribonucleotide reductase activity. Betaherpesviruses probably use another strategy to expand the dNTP pool in a quiescent host cell. The polypeptide is Ribonucleoside-diphosphate reductase large subunit-like protein (Homo sapiens (Human)).